Here is a 1192-residue protein sequence, read N- to C-terminus: DNA topoisomerase 2 (1192 aa).

Residues Asn-64, Asn-95, and 142–149 (GTNGVGLK) contribute to the ATP site. 3 residues coordinate Mg(2+): Glu-438, Asp-539, and Asp-541. The Topo IIA-type catalytic domain occupies 707-1174 (IPNFLDGMTR…PGASVWLEEI (468 aa)). Residue Tyr-800 is the O-(5'-phospho-DNA)-tyrosine intermediate of the active site.

This sequence belongs to the type II topoisomerase family. Mg(2+) serves as cofactor. It depends on Mn(2+) as a cofactor. The cofactor is Ca(2+).

Its subcellular location is the host cytoplasm. It carries out the reaction ATP-dependent breakage, passage and rejoining of double-stranded DNA.. Functionally, type II topoisomerase. Processively relaxes supercoiled DNA. Displays DNA-supercoiling activity only when associated with the viral histone-like protein. The polypeptide is DNA topoisomerase 2 (African swine fever virus (isolate Tick/South Africa/Pretoriuskop Pr4/1996) (ASFV)).